The sequence spans 437 residues: Elongation factor 1-gamma (437 aa).

N-acetylalanine is present on Ala-2. Residues 2-87 (AAGTLYTYPE…YVSNEELRGS (86 aa)) form the GST N-terminal domain. The 129-residue stretch at 88 to 216 (TPEAAAQVVQ…VKLCEKMAQF (129 aa)) folds into the GST C-terminal domain. N6-acetyllysine is present on residues Lys-147 and Lys-212. Residues 221 to 254 (FAESQPKKDTPRKEKGSREEKQKPQAERKEEKKA) show a composition bias toward basic and acidic residues. Residues 221–268 (FAESQPKKDTPRKEKGSREEKQKPQAERKEEKKAAAPAPEEEMDECEQ) are disordered. Lys-253 is covalently cross-linked (Glycyl lysine isopeptide (Lys-Gly) (interchain with G-Cter in SUMO1)). The EF-1-gamma C-terminal domain occupies 276 to 437 (AKDPFAHLPK…KAVNQGKIFK (162 aa)). A Glycyl lysine isopeptide (Lys-Gly) (interchain with G-Cter in SUMO2) cross-link involves residue Lys-285. The residue at position 401 (Lys-401) is an N6-acetyllysine. An N6-acetyllysine; alternate modification is found at Lys-434. Lys-434 is subject to N6-malonyllysine; alternate.

As to quaternary structure, EF-1 is composed of four subunits: alpha, beta, delta, and gamma.

Probably plays a role in anchoring the complex to other cellular components. This chain is Elongation factor 1-gamma (Eef1g), found in Mus musculus (Mouse).